The primary structure comprises 623 residues: Ciliated left-right organizer metallopeptidase (623 aa).

Positions 1 to 20 (MSFLLCIGILLLPWFPCVCG) are cleaved as a signal peptide. Residues 21-578 (KCIFDQIQRS…LFLVSEAKIS (558 aa)) lie on the Extracellular side of the membrane. Position 249 (His-249) interacts with Zn(2+). Glu-250 is an active-site residue. Positions 253 and 326 each coordinate Zn(2+). A helical transmembrane segment spans residues 579–599 (LAAVLSLMAVFALLSAAVLLY). The Cytoplasmic portion of the chain corresponds to 600–623 (RKNLSVRVHAASYRTPLPHILYRN).

This sequence belongs to the peptidase M8 family. It depends on Zn(2+) as a cofactor. Expressed specifically in dorsal forerunner cells (DFCs) that form a ciliated Kupffer's vesicle later.

It is found in the membrane. Functionally, plays an essential role for patterning the left-right axis. Requires solely on the left side, downstream of the leftward flow, but upstream of dand5, a nodal inhibitor involved in left-right patterning. The sequence is that of Ciliated left-right organizer metallopeptidase (cirop) from Danio rerio (Zebrafish).